A 198-amino-acid chain; its full sequence is Superoxide dismutase [Mn], mitochondrial (198 aa).

Residue histidine 26 participates in Mn(2+) binding. Tyrosine 34 is subject to 3'-nitrotyrosine. 2 positions are modified to N6-acetyllysine; alternate: lysine 44 and lysine 51. N6-succinyllysine; alternate is present on residues lysine 44 and lysine 51. Histidine 74 contacts Mn(2+). Lysine 90 is modified (N6-acetyllysine). Residues lysine 98 and lysine 106 each carry the N6-acetyllysine; alternate modification. Residues lysine 98 and lysine 106 each carry the N6-succinyllysine; alternate modification. Positions 159 and 163 each coordinate Mn(2+). Lysine 178 bears the N6-acetyllysine mark.

The protein belongs to the iron/manganese superoxide dismutase family. In terms of assembly, homotetramer. It depends on Mn(2+) as a cofactor. Post-translationally, nitrated under oxidative stress. Nitration coupled with oxidation inhibits the catalytic activity. In terms of processing, acetylation at Lys-98 decreases enzymatic activity. Deacetylated by SIRT3 upon exposure to ionizing radiations or after long fasting. Polyubiquitinated; leading to proteasomal degradation. Deubiquitinated by USP36 which increases protein stability.

It is found in the mitochondrion matrix. It catalyses the reaction 2 superoxide + 2 H(+) = H2O2 + O2. Destroys superoxide anion radicals which are normally produced within the cells and which are toxic to biological systems. This Pan troglodytes (Chimpanzee) protein is Superoxide dismutase [Mn], mitochondrial (SOD2).